Here is a 209-residue protein sequence, read N- to C-terminus: NADH-quinone oxidoreductase subunit C (209 aa).

Belongs to the complex I 30 kDa subunit family. As to quaternary structure, NDH-1 is composed of 14 different subunits. Subunits NuoB, C, D, E, F, and G constitute the peripheral sector of the complex.

It is found in the cell inner membrane. It catalyses the reaction a quinone + NADH + 5 H(+)(in) = a quinol + NAD(+) + 4 H(+)(out). NDH-1 shuttles electrons from NADH, via FMN and iron-sulfur (Fe-S) centers, to quinones in the respiratory chain. The immediate electron acceptor for the enzyme in this species is believed to be ubiquinone. Couples the redox reaction to proton translocation (for every two electrons transferred, four hydrogen ions are translocated across the cytoplasmic membrane), and thus conserves the redox energy in a proton gradient. This chain is NADH-quinone oxidoreductase subunit C, found in Bordetella petrii (strain ATCC BAA-461 / DSM 12804 / CCUG 43448).